Here is a 66-residue protein sequence, read N- to C-terminus: Sarcoplasmic/endoplasmic reticulum calcium ATPase regulator ARLN (66 aa).

The residue at position 1 (M1) is an N-acetylmethionine. The disordered stretch occupies residues 1-38; the sequence is MEVDVPGVDGRDGLRERRGLSEGGRQNLDVRPQSGANG. The span at 9 to 20 shows a compositional bias: basic and acidic residues; that stretch reads DGRDGLRERRGL. A helical transmembrane segment spans residues 45 to 65; sequence WLDLWLFIFFDVVVFLFVYFL.

As to quaternary structure, homooligomer. Can also form heterooligomers with other sarcoplasmic/endoplasmic reticulum calcium ATPase (SERCA) regulators ERLN, PLN, SLN and STRIT1/DWORF. Monomer. Interacts as a monomer with ATP2A2/SERCA2; the interaction results in inhibition of ATP2A2 Ca(2+) affinity.

The protein localises to the endoplasmic reticulum membrane. Its function is as follows. Inhibits the activity of the calcium ATPases ATP2A2/SERCA2 and ATP2A3/SERCA3 by decreasing their apparent affinity for Ca(2+). This chain is Sarcoplasmic/endoplasmic reticulum calcium ATPase regulator ARLN (ARLN), found in Pongo abelii (Sumatran orangutan).